Consider the following 410-residue polypeptide: MAICSTDNELVELLWHNGGVVAQPQAAQARVVSSSGRGQSASVLTGDDTETAAWFPDTLDDALEKDLYTQLWRSVTGDAFPAAAAAGPSSHHAPPPDLPPPAARPPMRSGIGSSWTGDICSAFCGSNHIPETAAQRCRDAGAALPPERPRRSSTHDGAGTSSSGGSGSNFGASGLPSESASAHKRKGREDSDSRSEDAECEATEETKSSSRRYGSKRRTRAAEVHNLSERRRRDRINEKMRALQELIPHCNKTDKASILDEAIEYLKSLQMQVQIMWMTTGMAPMMFPGAHQFMPPMAVGMNSACMPAAQGLSHMSRLPYMNHSMPNHIPLNSSPAMNPMNVANQMQNIQLREASNPFLHPDGWQTVPPQVSGPYASGPQVAQQNQIPKASASTVLPNSGAEQPPTSDGI.

Low complexity predominate over residues 82 to 92; it reads AAAAAGPSSHH. Disordered stretches follow at residues 82 to 110 and 137 to 225; these read AAAAAGPSSHHAPPPDLPPPAARPPMRSG and CRDA…AEVH. Positions 93–104 are enriched in pro residues; sequence APPPDLPPPAAR. The span at 187–197 shows a compositional bias: basic and acidic residues; sequence GREDSDSRSED. Residues 209–219 are compositionally biased toward basic residues; the sequence is SSRRYGSKRRT. The interval 220–233 is basic motif; it reads RAAEVHNLSERRRR. The region spanning 220–269 is the bHLH domain; the sequence is RAAEVHNLSERRRRDRINEKMRALQELIPHCNKTDKASILDEAIEYLKSL. Residues 234 to 269 form a helix-loop-helix motif region; sequence DRINEKMRALQELIPHCNKTDKASILDEAIEYLKSL. The tract at residues 357-410 is disordered; the sequence is PFLHPDGWQTVPPQVSGPYASGPQVAQQNQIPKASASTVLPNSGAEQPPTSDGI. The segment covering 380–410 has biased composition (polar residues); sequence QVAQQNQIPKASASTVLPNSGAEQPPTSDGI.

The protein belongs to the bHLH protein family. As to quaternary structure, interacts with PRR1. Interacts with LF. Highly expressed in the node portions of the stem. Expressed in the leaves and the basal part of shoots.

The protein localises to the nucleus. Functionally, transcription factor that may act as negative regulator of phyB-dependent light signal transduction. Transcription activator that acts as a positive regulator of internode elongation. May function via regulation of cell wall-related genes. May play a role in a drought-associated growth-restriction mechanism in response to drought stress. This Oryza sativa subsp. japonica (Rice) protein is Transcription factor PHYTOCHROME INTERACTING FACTOR-LIKE 13.